A 366-amino-acid polypeptide reads, in one-letter code: Histidinol-phosphate aminotransferase 2 (366 aa).

Residue Lys-226 is modified to N6-(pyridoxal phosphate)lysine.

The protein belongs to the class-II pyridoxal-phosphate-dependent aminotransferase family. Histidinol-phosphate aminotransferase subfamily. Homodimer. The cofactor is pyridoxal 5'-phosphate.

The catalysed reaction is L-histidinol phosphate + 2-oxoglutarate = 3-(imidazol-4-yl)-2-oxopropyl phosphate + L-glutamate. Its pathway is amino-acid biosynthesis; L-histidine biosynthesis; L-histidine from 5-phospho-alpha-D-ribose 1-diphosphate: step 7/9. In Cupriavidus pinatubonensis (strain JMP 134 / LMG 1197) (Cupriavidus necator (strain JMP 134)), this protein is Histidinol-phosphate aminotransferase 2.